A 121-amino-acid polypeptide reads, in one-letter code: Large ribosomal subunit protein bL20 (121 aa).

The protein belongs to the bacterial ribosomal protein bL20 family.

In terms of biological role, binds directly to 23S ribosomal RNA and is necessary for the in vitro assembly process of the 50S ribosomal subunit. It is not involved in the protein synthesizing functions of that subunit. This is Large ribosomal subunit protein bL20 from Francisella tularensis subsp. mediasiatica (strain FSC147).